The following is a 598-amino-acid chain: Potassium voltage-gated channel subfamily A member 5 (598 aa).

A disordered region spans residues 1–89; it reads MEIALGPLEN…EEGEGDPGLS (89 aa). The tetramerization domain stretch occupies residues 1–195; it reads MEIALGPLEN…FYQLGDEAME (195 aa). Residues 1 to 231 are Cytoplasmic-facing; sequence MEIALGPLEN…LIFEYPESSG (231 aa). Pro residues predominate over residues 60 to 69; that stretch reads RPLPPQPPEL. A Glycyl lysine isopeptide (Lys-Gly) (interchain with G-Cter in SUMO) cross-link involves residue lysine 205. Residues 232–253 form a helical membrane-spanning segment; that stretch reads SARAIAIVSVLVILISIITFCL. Residues 254–308 lie on the Extracellular side of the membrane; it reads ETLPEFKDERELLRHPPVPHQPPAAPALGANGSGAVAPASGSTVAPLLPRTLADP. A helical transmembrane segment spans residues 309 to 330; sequence FFIVETTCVIWFTFELLVRFFA. Cysteine 331 carries the S-palmitoyl cysteine lipid modification. At 331–341 the chain is on the cytoplasmic side; that stretch reads CPSKAEFSRNI. The helical transmembrane segment at 342–362 threads the bilayer; the sequence is MNIIDIVAIFPYFITLGTELA. Residues 363–380 lie on the Extracellular side of the membrane; sequence EQQPGGGGGGQNGQQAMS. A helical; Voltage-sensor transmembrane segment spans residues 381-401; the sequence is LAILRVIRLVRVFRIFKLSRH. The Cytoplasmic segment spans residues 402-416; it reads SKGLQILGKTLQASM. The S4-S5 linker stretch occupies residues 403 to 416; the sequence is KGLQILGKTLQASM. The chain crosses the membrane as a helical span at residues 417–438; the sequence is RELGLLIFFLFIGVILFSSAVY. Residues 439–452 are Extracellular-facing; that stretch reads FAEADNQGTHFSSI. The helical intramembrane region spans 453 to 464; the sequence is PDAFWWAVVTMT. A Selectivity filter motif is present at residues 465–470; sequence TVGYGD. Residues 465-472 lie within the membrane without spanning it; it reads TVGYGDMR. Residues 480–508 form a helical membrane-spanning segment; it reads IVGSLCAIAGVLTIALPVPVIVSNFNYFY. The Cytoplasmic portion of the chain corresponds to 509 to 598; it reads HRETDHEEQA…CLDTSRETDL (90 aa). Positions 517-539 are disordered; that stretch reads QAALKEEPGSQSRGTSLDAGGQR. Residue lysine 521 forms a Glycyl lysine isopeptide (Lys-Gly) (interchain with G-Cter in SUMO) linkage. The PDZ-binding signature appears at 596-598; the sequence is TDL.

It belongs to the potassium channel family. A (Shaker) (TC 1.A.1.2) subfamily. Kv1.5/KCNA5 sub-subfamily. As to quaternary structure, homotetramer and heterotetramer of potassium channel proteins. Interacts with DLG1, which enhances channel currents. Forms a ternary complex with DLG1 and CAV3. Interacts with KCNAB1. Interacts with UBE2I. Interacts with XIRP2; the interaction is required for normal action potential configuration in the heart. In terms of processing, glycosylated. Sumoylated on Lys-205, and Lys-521, preferentially with SUMO3. Sumoylation regulates the voltage sensitivity of the channel.

It is found in the cell membrane. It carries out the reaction K(+)(in) = K(+)(out). Functionally, voltage-gated potassium channel that mediates transmembrane potassium transport in excitable membranes. Forms tetrameric potassium-selective channels through which potassium ions pass in accordance with their electrochemical gradient. The channel alternates between opened and closed conformations in response to the voltage difference across the membrane. Can form functional homotetrameric channels and heterotetrameric channels that contain variable proportions of KCNA1, KCNA2, KCNA4, KCNA5, and possibly other family members as well; channel properties depend on the type of alpha subunits that are part of the channel. Channel properties are modulated by cytoplasmic beta subunits that regulate the subcellular location of the alpha subunits and promote rapid inactivation. Homotetrameric channels display rapid activation and slow inactivation. Required for normal electrical conduction including formation of the infranodal ventricular conduction system and normal action potential configuration, as a result of its interaction with XIRP2. May play a role in regulating the secretion of insulin in normal pancreatic islets. In Oryctolagus cuniculus (Rabbit), this protein is Potassium voltage-gated channel subfamily A member 5 (KCNA5).